Consider the following 118-residue polypeptide: Beta-2-microglobulin (118 aa).

The signal sequence occupies residues 1–20 (MARFVALVLLGLLSLSGLDA). The 88-residue stretch at 25–112 (PKIQVYSRHP…HVTLEQPRIV (88 aa)) folds into the Ig-like C1-type domain. Residues C45 and C99 are joined by a disulfide bond.

Belongs to the beta-2-microglobulin family. Heterodimer of an alpha chain and a beta chain. Beta-2-microglobulin is the beta-chain of major histocompatibility complex class I molecules. Forms a heterotrimer with MR1 and a metabolite antigen.

It localises to the secreted. Functionally, component of the class I major histocompatibility complex (MHC). Involved in the presentation of peptide antigens to the immune system. This Bos taurus (Bovine) protein is Beta-2-microglobulin (B2M).